We begin with the raw amino-acid sequence, 565 residues long: uncharacterized protein (565 aa).

The N-terminal stretch at 1 to 21 (MKIPSQQVLLALPLLASPAQS) is a signal peptide. Residues Asn-46 and Asn-88 are each glycosylated (N-linked (GlcNAc...) asparagine). Residues 118–302 (QGIVPYYSVS…TSVTYKTHPK (185 aa)) enclose the FAD-binding PCMH-type domain. At His-155 the chain carries Pros-8alpha-FAD histidine. Asn-191, Asn-314, Asn-364, Asn-371, and Asn-484 each carry an N-linked (GlcNAc...) asparagine glycan.

It belongs to the oxygen-dependent FAD-linked oxidoreductase family. FAD serves as cofactor.

Its subcellular location is the secreted. This is an uncharacterized protein from Arthroderma benhamiae (strain ATCC MYA-4681 / CBS 112371) (Trichophyton mentagrophytes).